The following is a 332-amino-acid chain: Myogenic-determination protein (332 aa).

Residues 22–54 are disordered; it reads HNGYGQPTHPGYGFSAYSQQNPIAHPGQNPHQT. The region spanning 161 to 212 is the bHLH domain; it reads DRRKAATMRERRRLRKVNEAFEILKRRTSSNPNQRLPKVEILRNAIEYIESL. Residues 293-309 are compositionally biased toward polar residues; sequence TTSPIQNKATPSASDTQ. The interval 293–332 is disordered; that stretch reads TTSPIQNKATPSASDTQSPPSSGATAPTSLHVNFKRKCST. Over residues 310-321 the composition is skewed to low complexity; the sequence is SPPSSGATAPTS.

As to quaternary structure, efficient DNA binding requires dimerization with another bHLH protein.

It localises to the nucleus. Its function is as follows. May play an important role in the early development of muscle. This Drosophila melanogaster (Fruit fly) protein is Myogenic-determination protein (nau).